A 498-amino-acid chain; its full sequence is Glycerol kinase (498 aa).

Thr-12 is an ADP binding site. Residues Thr-12, Thr-13, and Ser-14 each contribute to the ATP site. Thr-12 is a sn-glycerol 3-phosphate binding site. Arg-16 is an ADP binding site. Residues Arg-82, Glu-83, Tyr-134, and Asp-241 each coordinate sn-glycerol 3-phosphate. Arg-82, Glu-83, Tyr-134, Asp-241, and Gln-242 together coordinate glycerol. 2 residues coordinate ADP: Thr-263 and Gly-310. ATP-binding residues include Thr-263, Gly-310, Gln-314, and Gly-411. Positions 411 and 415 each coordinate ADP.

This sequence belongs to the FGGY kinase family.

It catalyses the reaction glycerol + ATP = sn-glycerol 3-phosphate + ADP + H(+). It participates in polyol metabolism; glycerol degradation via glycerol kinase pathway; sn-glycerol 3-phosphate from glycerol: step 1/1. Inhibited by fructose 1,6-bisphosphate (FBP). Its function is as follows. Key enzyme in the regulation of glycerol uptake and metabolism. Catalyzes the phosphorylation of glycerol to yield sn-glycerol 3-phosphate. The chain is Glycerol kinase from Herminiimonas arsenicoxydans.